The primary structure comprises 127 residues: Putative 2Fe-2S ferredoxin (127 aa).

Residues Cys23, Cys54, and Cys58 each coordinate [2Fe-2S] cluster.

This sequence belongs to the 2Fe2S Shethna-type ferredoxin family. [2Fe-2S] cluster is required as a cofactor.

Functionally, ferredoxins are iron-sulfur proteins that transfer electrons in a wide variety of metabolic reactions. This is Putative 2Fe-2S ferredoxin (cbiW) from Priestia megaterium (Bacillus megaterium).